The primary structure comprises 71 residues: General transcription and DNA repair factor IIH subunit TFB5 (71 aa).

It belongs to the TFB5 family. As to quaternary structure, component of the 7-subunit TFIIH core complex.

It is found in the nucleus. The protein resides in the chromosome. Its function is as follows. Component of the general transcription and DNA repair factor IIH (TFIIH) core complex, which is involved in general and transcription-coupled nucleotide excision repair (NER) of damaged DNA and in RNA transcription by RNA polymerase II. In NER, TFIIH acts by opening DNA around the lesion to allow the excision of the damaged oligonucleotide and its replacement by a new DNA fragment. In transcription, TFIIH has an essential role in transcription initiation. When the pre-initiation complex (PIC) has been established, TFIIH is required for promoter opening and promoter escape. Necessary for the stability of the TFIIH complex and for the presence of normal levels of TFIIH in the cell. Required for efficient binding of TFIIH to damaged DNA. Dispensable for normal development, but required when transcription is challenged. In Caenorhabditis elegans, this protein is General transcription and DNA repair factor IIH subunit TFB5.